We begin with the raw amino-acid sequence, 75 residues long: Exodeoxyribonuclease 7 small subunit (75 aa).

This sequence belongs to the XseB family. As to quaternary structure, heterooligomer composed of large and small subunits.

The protein resides in the cytoplasm. The enzyme catalyses Exonucleolytic cleavage in either 5'- to 3'- or 3'- to 5'-direction to yield nucleoside 5'-phosphates.. In terms of biological role, bidirectionally degrades single-stranded DNA into large acid-insoluble oligonucleotides, which are then degraded further into small acid-soluble oligonucleotides. This Clostridium perfringens (strain ATCC 13124 / DSM 756 / JCM 1290 / NCIMB 6125 / NCTC 8237 / Type A) protein is Exodeoxyribonuclease 7 small subunit.